Consider the following 335-residue polypeptide: MKFGETFTEYLHGEEEWFLEKCRFVEYKKLKKVLKKCKTCNSTKSDDGQIIPSATSSSLSDSCECKACPWCDQMFFEELMKEATDIAGFFRSRVRHLLHLHVATGMQRYMIRLRRCFTDEKQALVQEGQILIQYITMNAIAIRKILKKYDKVHSSENGKNFKLKMRAERIELLHSPWLIELGAFYLNSGLDNVGNFKNSFGRVACENLNEDQPVLKLMLPNSIELEYDLTCAICLETVFNPYALKCGHIFCNSCACSAASVLIFQGIKAAPRHSKCPICREAGVYAEAVHMIELHLLLKTRSKEYWKERMMNERSEMVKQSKMFWNEQTKHMIGY.

The SPX domain occupies 1 to 163 (MKFGETFTEY…SSENGKNFKL (163 aa)). The RING-type zinc finger occupies 231–280 (CAICLETVFNPYALKCGHIFCNSCACSAASVLIFQGIKAAPRHSKCPICR).

The protein belongs to the RING-type zinc finger family.

The catalysed reaction is S-ubiquitinyl-[E2 ubiquitin-conjugating enzyme]-L-cysteine + [acceptor protein]-L-lysine = [E2 ubiquitin-conjugating enzyme]-L-cysteine + N(6)-ubiquitinyl-[acceptor protein]-L-lysine.. The protein operates within protein modification; protein ubiquitination. In Arabidopsis thaliana (Mouse-ear cress), this protein is Probable E3 ubiquitin-protein ligase BAH1-like (RF178).